The following is a 125-amino-acid chain: Large ribosomal subunit protein bL12 (125 aa).

Belongs to the bacterial ribosomal protein bL12 family. Homodimer. Part of the ribosomal stalk of the 50S ribosomal subunit. Forms a multimeric L10(L12)X complex, where L10 forms an elongated spine to which 2 to 4 L12 dimers bind in a sequential fashion. Binds GTP-bound translation factors.

Functionally, forms part of the ribosomal stalk which helps the ribosome interact with GTP-bound translation factors. Is thus essential for accurate translation. The protein is Large ribosomal subunit protein bL12 of Heliobacterium modesticaldum (strain ATCC 51547 / Ice1).